The primary structure comprises 88 residues: LYR motif-containing protein 2 (88 aa).

The N-terminal 19 residues, 1-19, are a transit peptide targeting the mitochondrion; it reads MAASRLPPATLTLKQFMRR.

Belongs to the complex I LYR family.

Its subcellular location is the mitochondrion. Involved in efficient integration of the N-module into mitochondrial respiratory chain complex I. This Rattus norvegicus (Rat) protein is LYR motif-containing protein 2 (Lyrm2).